The chain runs to 247 residues: MRFPSPLIEGRLVRRYKRFLADVALADGTLVTAHCANPGAMLGLNAEGFRVLLSPSTNPARKLGFSWELVEAELPGGPQWVGINTARPNALVAEAFRENKLAPLAGYETLRAEVAYGKASRVDFLASGGGLPPCHVEVKNCHLMRQAGLAEFPDCKAARSARHMEELAGVVAAGGRAMLIVVIQMRADAFDVARDIDPAFDRALRAALAAGVEAYAYTCAVGPEGVEIAEPVQILTSPASPAGSGTS.

It belongs to the SfsA family.

The polypeptide is Sugar fermentation stimulation protein homolog (Methylorubrum populi (strain ATCC BAA-705 / NCIMB 13946 / BJ001) (Methylobacterium populi)).